We begin with the raw amino-acid sequence, 202 residues long: Xanthine phosphoribosyltransferase (202 aa).

Positions 20 and 27 each coordinate xanthine. 128 to 132 is a binding site for 5-phospho-alpha-D-ribose 1-diphosphate; sequence ASGGT. Lys-156 lines the xanthine pocket.

The protein belongs to the purine/pyrimidine phosphoribosyltransferase family. Xpt subfamily. As to quaternary structure, homodimer.

Its subcellular location is the cytoplasm. It carries out the reaction XMP + diphosphate = xanthine + 5-phospho-alpha-D-ribose 1-diphosphate. It participates in purine metabolism; XMP biosynthesis via salvage pathway; XMP from xanthine: step 1/1. Its function is as follows. Converts the preformed base xanthine, a product of nucleic acid breakdown, to xanthosine 5'-monophosphate (XMP), so it can be reused for RNA or DNA synthesis. The sequence is that of Xanthine phosphoribosyltransferase from Deinococcus geothermalis (strain DSM 11300 / CIP 105573 / AG-3a).